The sequence spans 102 residues: Large ribosomal subunit protein bL21 (102 aa).

The protein belongs to the bacterial ribosomal protein bL21 family. As to quaternary structure, part of the 50S ribosomal subunit. Contacts protein L20.

Its function is as follows. This protein binds to 23S rRNA in the presence of protein L20. This Exiguobacterium sibiricum (strain DSM 17290 / CCUG 55495 / CIP 109462 / JCM 13490 / 255-15) protein is Large ribosomal subunit protein bL21.